The chain runs to 692 residues: Protein arginine N-methyltransferase 7 (692 aa).

2 consecutive SAM-dependent MTase PRMT-type domains span residues 14–345 (SVEW…YCVW) and 358–684 (RVRQ…IIME). An Omega-N-methylarginine modification is found at R32. Catalysis depends on residues E144 and E153.

The protein belongs to the class I-like SAM-binding methyltransferase superfamily. Protein arginine N-methyltransferase family. PRMT7 subfamily. As to quaternary structure, homodimer and heterodimer. Interacts with CTCFL. Interacts with PRMT5 and SNRPD3.

It is found in the cytoplasm. It localises to the cytosol. The protein resides in the nucleus. The catalysed reaction is L-arginyl-[protein] + S-adenosyl-L-methionine = N(omega)-methyl-L-arginyl-[protein] + S-adenosyl-L-homocysteine + H(+). In terms of biological role, arginine methyltransferase that can both catalyze the formation of omega-N monomethylarginine (MMA) and symmetrical dimethylarginine (sDMA), with a preference for the formation of MMA. Specifically mediates the symmetrical dimethylation of arginine residues in the small nuclear ribonucleoproteins Sm D1 (SNRPD1) and Sm D3 (SNRPD3); such methylation being required for the assembly and biogenesis of snRNP core particles. Specifically mediates the symmetric dimethylation of histone H4 'Arg-3' to form H4R3me2s. Plays a role in gene imprinting by being recruited by CTCFL at the H19 imprinted control region (ICR) and methylating histone H4 to form H4R3me2s, possibly leading to recruit DNA methyltransferases at these sites. May also play a role in embryonic stem cell (ESC) pluripotency. Also able to mediate the arginine methylation of histone H2A and myelin basic protein (MBP) in vitro; the relevance of such results is however unclear in vivo. The sequence is that of Protein arginine N-methyltransferase 7 (PRMT7) from Homo sapiens (Human).